A 179-amino-acid polypeptide reads, in one-letter code: Large ribosomal subunit protein uL6 (179 aa).

Belongs to the universal ribosomal protein uL6 family. As to quaternary structure, part of the 50S ribosomal subunit.

In terms of biological role, this protein binds to the 23S rRNA, and is important in its secondary structure. It is located near the subunit interface in the base of the L7/L12 stalk, and near the tRNA binding site of the peptidyltransferase center. The chain is Large ribosomal subunit protein uL6 from Leptospira biflexa serovar Patoc (strain Patoc 1 / ATCC 23582 / Paris).